We begin with the raw amino-acid sequence, 316 residues long: GMP reductase (316 aa).

The Thioimidate intermediate role is filled by Cys-175. An NADP(+)-binding site is contributed by 202 to 225 (VIADGGIVEHGDIAKALVCGATMV).

The protein belongs to the IMPDH/GMPR family. GuaC type 2 subfamily.

The enzyme catalyses IMP + NH4(+) + NADP(+) = GMP + NADPH + 2 H(+). Its function is as follows. Catalyzes the irreversible NADPH-dependent deamination of GMP to IMP. It functions in the conversion of nucleobase, nucleoside and nucleotide derivatives of G to A nucleotides, and in maintaining the intracellular balance of A and G nucleotides. This chain is GMP reductase, found in Chromobacterium violaceum (strain ATCC 12472 / DSM 30191 / JCM 1249 / CCUG 213 / NBRC 12614 / NCIMB 9131 / NCTC 9757 / MK).